A 156-amino-acid chain; its full sequence is Myosin, essential light chain, adductor muscle (156 aa).

2 consecutive EF-hand domains span residues Asp6–Asn43 and Gly81–Arg116.

In terms of biological role, in molluscan muscle, calcium regulation is associated with myosin rather than with actin. Muscle myosin contains two types of light chains: the catalytic light chain, essential for ATPase activity, and the regulatory light chain, a calcium-binding protein responsible for Ca(2+) dependent binding and Ca(2+) dependent Mg-ATPase activity. In Mizuhopecten yessoensis (Japanese scallop), this protein is Myosin, essential light chain, adductor muscle.